The sequence spans 371 residues: Cytochrome b (371 aa).

Helical transmembrane passes span 25–45 (FGSM…FLAI), 69–90 (WIMQ…YIHI), 105–125 (WLSG…GYVL), and 170–190 (FCAL…IHII). Heme b is bound by residues His-75 and His-89. The heme b site is built by His-174 and His-188. His-193 lines the a ubiquinone pocket. The next 4 helical transmembrane spans lie at 218 to 238 (YKDF…LSVS), 280 to 300 (LGGT…PFTH), 312 to 332 (LSQT…WTAT), and 339 to 358 (FITI…IMNP).

The protein belongs to the cytochrome b family. In terms of assembly, the cytochrome bc1 complex contains 3 respiratory subunits (MT-CYB, CYC1 and UQCRFS1), 2 core proteins (UQCRC1 and UQCRC2) and probably 6 low-molecular weight proteins. The cofactor is heme b.

Its subcellular location is the mitochondrion inner membrane. Its function is as follows. Component of the ubiquinol-cytochrome c reductase complex (complex III or cytochrome b-c1 complex) that is part of the mitochondrial respiratory chain. The b-c1 complex mediates electron transfer from ubiquinol to cytochrome c. Contributes to the generation of a proton gradient across the mitochondrial membrane that is then used for ATP synthesis. This is Cytochrome b (MT-CYB) from Micrurus tener microgalbineus (Spotted coral snake).